Reading from the N-terminus, the 373-residue chain is Aromatic amino acid aminotransferase (373 aa).

An N6-(pyridoxal phosphate)lysine modification is found at Lys-212.

Belongs to the class-II pyridoxal-phosphate-dependent aminotransferase family. Homodimer. Pyridoxal 5'-phosphate serves as cofactor.

The enzyme catalyses an aromatic L-alpha-amino acid + 2-oxoglutarate = an aromatic oxo-acid + L-glutamate. Functionally, aminotransferase that catalyzes the conversion of aromatic amino acids and 2-oxoglutarate into corresponding aromatic oxo acids and L-glutamate. The protein is Aromatic amino acid aminotransferase of Corynebacterium jeikeium (strain K411).